The primary structure comprises 819 residues: Cadherin-24 (819 aa).

A signal peptide spans 1–19; sequence MWGLVRLLLAWLGGWGCMG. A propeptide spanning residues 21–44 is cleaved from the precursor; it reads LAAPARAWAGSREHPGPALLRTRR. The Extracellular portion of the chain corresponds to 45–641; sequence SWVWNQFFVI…LSAAGLSTGA (597 aa). Cadherin domains follow at residues 46–150, 151–259, 260–374, 375–517, and 517–630; these read WVWN…PPIF, PLGP…PPKF, PQSL…PPAF, TQAA…APQL, and LAEP…WPEA. Residues N446, N548, and N563 are each glycosylated (N-linked (GlcNAc...) asparagine). The chain crosses the membrane as a helical span at residues 642 to 662; it reads LLAIITCVGALLALVVLFVAL. Residues 663 to 819 are Cytoplasmic-facing; sequence RRQKQEALMV…LYGAKEPPAP (157 aa). Positions 768-800 are disordered; the sequence is YEGRGSSCGSLSSLGSGSEAGGAPGPAEPLDDW. The segment covering 771 to 784 has biased composition (low complexity); the sequence is RGSSCGSLSSLGSG.

In terms of assembly, associates with alpha-, beta- and delta-catenins.

The protein localises to the cell membrane. Its function is as follows. Cadherins are calcium-dependent cell adhesion proteins. They preferentially interact with themselves in a homophilic manner in connecting cells; cadherins may thus contribute to the sorting of heterogeneous cell types. Cadherin-24 mediate strong cell-cell adhesion. The chain is Cadherin-24 (CDH24) from Homo sapiens (Human).